We begin with the raw amino-acid sequence, 212 residues long: 3-isopropylmalate dehydratase small subunit 2 (212 aa).

The protein belongs to the LeuD family. LeuD type 1 subfamily. In terms of assembly, heterodimer of LeuC and LeuD.

The catalysed reaction is (2R,3S)-3-isopropylmalate = (2S)-2-isopropylmalate. It functions in the pathway amino-acid biosynthesis; L-leucine biosynthesis; L-leucine from 3-methyl-2-oxobutanoate: step 2/4. Its function is as follows. Catalyzes the isomerization between 2-isopropylmalate and 3-isopropylmalate, via the formation of 2-isopropylmaleate. The polypeptide is 3-isopropylmalate dehydratase small subunit 2 (Chromobacterium violaceum (strain ATCC 12472 / DSM 30191 / JCM 1249 / CCUG 213 / NBRC 12614 / NCIMB 9131 / NCTC 9757 / MK)).